The following is a 113-amino-acid chain: Large ribosomal subunit protein eL30 (113 aa).

Belongs to the eukaryotic ribosomal protein eL30 family.

The protein is Large ribosomal subunit protein eL30 (RpL30) of Spodoptera frugiperda (Fall armyworm).